The primary structure comprises 95 residues: DNA-directed RNA polymerase subunit omega (95 aa).

It belongs to the RNA polymerase subunit omega family. As to quaternary structure, the RNAP catalytic core consists of 2 alpha, 1 beta, 1 beta' and 1 omega subunit. When a sigma factor is associated with the core the holoenzyme is formed, which can initiate transcription.

The catalysed reaction is RNA(n) + a ribonucleoside 5'-triphosphate = RNA(n+1) + diphosphate. Functionally, promotes RNA polymerase assembly. Latches the N- and C-terminal regions of the beta' subunit thereby facilitating its interaction with the beta and alpha subunits. In Colwellia psychrerythraea (strain 34H / ATCC BAA-681) (Vibrio psychroerythus), this protein is DNA-directed RNA polymerase subunit omega.